We begin with the raw amino-acid sequence, 430 residues long: Adenylosuccinate synthetase (430 aa).

Residues 12–18 (GDEGKGK) and 40–42 (GHT) contribute to the GTP site. D13 serves as the catalytic Proton acceptor. Positions 13 and 40 each coordinate Mg(2+). IMP is bound by residues 13–16 (DEGK), 38–41 (NAGH), T130, R144, Q224, T239, and R303. H41 (proton donor) is an active-site residue. A substrate-binding site is contributed by 299–305 (VNTGRKR). GTP-binding positions include R305, 331–333 (KLD), and 413–415 (STS).

Belongs to the adenylosuccinate synthetase family. As to quaternary structure, homodimer. Mg(2+) serves as cofactor.

Its subcellular location is the cytoplasm. It carries out the reaction IMP + L-aspartate + GTP = N(6)-(1,2-dicarboxyethyl)-AMP + GDP + phosphate + 2 H(+). The protein operates within purine metabolism; AMP biosynthesis via de novo pathway; AMP from IMP: step 1/2. Plays an important role in the de novo pathway of purine nucleotide biosynthesis. Catalyzes the first committed step in the biosynthesis of AMP from IMP. This is Adenylosuccinate synthetase from Nitrobacter hamburgensis (strain DSM 10229 / NCIMB 13809 / X14).